The sequence spans 116 residues: Cation channel sperm-associated auxiliary subunit TMEM262 (116 aa).

At 1–16 (MWLQDRIATFFFPKGM) the chain is on the cytoplasmic side. A helical membrane pass occupies residues 17 to 38 (MLTTAALMLFFLHLGIFIRDVH). Topologically, residues 39 to 51 (NFCITYHYDHMSF) are extracellular. A helical membrane pass occupies residues 52-72 (HYTVVLMFSQVISICWAAMGS). Topologically, residues 73 to 84 (LYAEMTENKYVC) are cytoplasmic. The helical transmembrane segment at 85–107 (FSALTILMLNGAMFFNRLSLEFL) threads the bilayer. Residues 108–116 (AIEYREEHH) are Extracellular-facing.

In terms of assembly, component of the CatSper complex or CatSpermasome composed of the core pore-forming members CATSPER1, CATSPER2, CATSPER3 and CATSPER4 as well as auxiliary members CATSPERB, CATSPERG, CATSPERD, CATSPERE, CATSPERZ, C2CD6/CATSPERT, TMEM249, TMEM262 and EFCAB9. HSPA1 may be an additional auxiliary complex member. The core complex members CATSPER1, CATSPER2, CATSPER3 and CATSPER4 form a heterotetrameric channel. The auxiliary CATSPERB, CATSPERG, CATSPERD and CATSPERE subunits form a pavilion-like structure over the pore which stabilizes the complex through interactions with CATSPER4, CATSPER3, CATSPER1 and CATSPER2 respectively. TMEM262/CATSPERH interacts with CATSPERB, further stabilizing the complex. C2CD6/CATSPERT interacts at least with CATSPERD and is required for targeting the CatSper complex in the flagellar membrane.

The protein resides in the cell projection. Its subcellular location is the cilium. It localises to the flagellum membrane. In terms of biological role, auxiliary component of the CatSper complex, a complex involved in sperm cell hyperactivation. This chain is Cation channel sperm-associated auxiliary subunit TMEM262, found in Homo sapiens (Human).